The sequence spans 86 residues: Co-chaperonin GroES (86 aa).

The protein belongs to the GroES chaperonin family. Heptamer of 7 subunits arranged in a ring. Interacts with the chaperonin GroEL.

The protein resides in the cytoplasm. In terms of biological role, together with the chaperonin GroEL, plays an essential role in assisting protein folding. The GroEL-GroES system forms a nano-cage that allows encapsulation of the non-native substrate proteins and provides a physical environment optimized to promote and accelerate protein folding. GroES binds to the apical surface of the GroEL ring, thereby capping the opening of the GroEL channel. This chain is Co-chaperonin GroES, found in Campylobacter jejuni subsp. doylei (strain ATCC BAA-1458 / RM4099 / 269.97).